The following is an 883-amino-acid chain: UTP--glucose-1-phosphate uridylyltransferase 3, chloroplastic (883 aa).

The N-terminal 72 residues, 1 to 72, are a transit peptide targeting the chloroplast; that stretch reads MANPQASPIL…HQVRHVSTVP (72 aa).

The protein belongs to the UDPGP type 1 family. Requires Mg(2+) as cofactor.

Its subcellular location is the plastid. It localises to the chloroplast. The catalysed reaction is alpha-D-glucose 1-phosphate + UTP + H(+) = UDP-alpha-D-glucose + diphosphate. Its activity is regulated as follows. Inhibited by pyrophosphate. Its function is as follows. Involved in the biosynthesis of sulfolipids in the chloroplast. Catalyzes the first committed step in sulfolipid biosynthesis. Converts glucose 1-phosphate to UDP-glucose, the precursor of the polar head of sulfolipid. In addition to glucose 1-phosphate, can use galactose 1-phosphate, but with much lower activity. No uridyltransferase activity with other hexose monophosphates. Specific for UTP and cannot use ATP, CTP, and GTP. In Arabidopsis thaliana (Mouse-ear cress), this protein is UTP--glucose-1-phosphate uridylyltransferase 3, chloroplastic.